Here is a 276-residue protein sequence, read N- to C-terminus: Urease accessory protein UreD (276 aa).

It belongs to the UreD family. In terms of assembly, ureD, UreF and UreG form a complex that acts as a GTP-hydrolysis-dependent molecular chaperone, activating the urease apoprotein by helping to assemble the nickel containing metallocenter of UreC. The UreE protein probably delivers the nickel.

The protein resides in the cytoplasm. Functionally, required for maturation of urease via the functional incorporation of the urease nickel metallocenter. The sequence is that of Urease accessory protein UreD from Bradyrhizobium diazoefficiens (strain JCM 10833 / BCRC 13528 / IAM 13628 / NBRC 14792 / USDA 110).